Consider the following 359-residue polypeptide: Membrane-bound lytic murein transglycosylase C (359 aa).

A signal peptide spans 1 to 16 (MKKYLALALIAPLLIS). Residue C17 is the site of N-palmitoyl cysteine attachment. Residue C17 is the site of S-diacylglycerol cysteine attachment.

It belongs to the transglycosylase Slt family.

The protein localises to the cell outer membrane. It carries out the reaction Exolytic cleavage of the (1-&gt;4)-beta-glycosidic linkage between N-acetylmuramic acid (MurNAc) and N-acetylglucosamine (GlcNAc) residues in peptidoglycan, from either the reducing or the non-reducing ends of the peptidoglycan chains, with concomitant formation of a 1,6-anhydrobond in the MurNAc residue.. Its function is as follows. Murein-degrading enzyme. May play a role in recycling of muropeptides during cell elongation and/or cell division. This Escherichia coli (strain SE11) protein is Membrane-bound lytic murein transglycosylase C.